The chain runs to 180 residues: ATP synthase subunit delta (180 aa).

This sequence belongs to the ATPase delta chain family. F-type ATPases have 2 components, F(1) - the catalytic core - and F(0) - the membrane proton channel. F(1) has five subunits: alpha(3), beta(3), gamma(1), delta(1), epsilon(1). F(0) has three main subunits: a(1), b(2) and c(10-14). The alpha and beta chains form an alternating ring which encloses part of the gamma chain. F(1) is attached to F(0) by a central stalk formed by the gamma and epsilon chains, while a peripheral stalk is formed by the delta and b chains.

It localises to the cell membrane. Functionally, f(1)F(0) ATP synthase produces ATP from ADP in the presence of a proton or sodium gradient. F-type ATPases consist of two structural domains, F(1) containing the extramembraneous catalytic core and F(0) containing the membrane proton channel, linked together by a central stalk and a peripheral stalk. During catalysis, ATP synthesis in the catalytic domain of F(1) is coupled via a rotary mechanism of the central stalk subunits to proton translocation. This protein is part of the stalk that links CF(0) to CF(1). It either transmits conformational changes from CF(0) to CF(1) or is implicated in proton conduction. This chain is ATP synthase subunit delta, found in Mycoplasma mobile (strain ATCC 43663 / 163K / NCTC 11711) (Mesomycoplasma mobile).